We begin with the raw amino-acid sequence, 484 residues long: tRNA sulfurtransferase (484 aa).

The 105-residue stretch at 63–167 (EAFADRLSCI…RENLYLVVNR (105 aa)) folds into the THUMP domain. Residues 185 to 186 (LI), lysine 267, glycine 289, and glutamine 298 each bind ATP. Cysteine 346 and cysteine 458 are disulfide-bonded. In terms of domain architecture, Rhodanese spans 406–484 (VNSNEVIIDV…GYENVKVYRP (79 aa)). The active-site Cysteine persulfide intermediate is the cysteine 458.

This sequence belongs to the ThiI family.

It is found in the cytoplasm. The enzyme catalyses [ThiI sulfur-carrier protein]-S-sulfanyl-L-cysteine + a uridine in tRNA + 2 reduced [2Fe-2S]-[ferredoxin] + ATP + H(+) = [ThiI sulfur-carrier protein]-L-cysteine + a 4-thiouridine in tRNA + 2 oxidized [2Fe-2S]-[ferredoxin] + AMP + diphosphate. It carries out the reaction [ThiS sulfur-carrier protein]-C-terminal Gly-Gly-AMP + S-sulfanyl-L-cysteinyl-[cysteine desulfurase] + AH2 = [ThiS sulfur-carrier protein]-C-terminal-Gly-aminoethanethioate + L-cysteinyl-[cysteine desulfurase] + A + AMP + 2 H(+). It participates in cofactor biosynthesis; thiamine diphosphate biosynthesis. In terms of biological role, catalyzes the ATP-dependent transfer of a sulfur to tRNA to produce 4-thiouridine in position 8 of tRNAs, which functions as a near-UV photosensor. Also catalyzes the transfer of sulfur to the sulfur carrier protein ThiS, forming ThiS-thiocarboxylate. This is a step in the synthesis of thiazole, in the thiamine biosynthesis pathway. The sulfur is donated as persulfide by IscS. The protein is tRNA sulfurtransferase of Shewanella sediminis (strain HAW-EB3).